The chain runs to 37 residues: Large ribosomal subunit protein bL36 (37 aa).

It belongs to the bacterial ribosomal protein bL36 family.

This Nostoc sp. (strain PCC 7120 / SAG 25.82 / UTEX 2576) protein is Large ribosomal subunit protein bL36.